A 199-amino-acid polypeptide reads, in one-letter code: Phosphatidylethanolamine N-methyltransferase (199 aa).

Residues 1–12 (MSWLLGYMDPTE) are Lumenal-facing. Positions 13–33 (PSFVAAVITIVFNPLFWNVVA) form an intramembrane region, helical. The Lumenal segment spans residues 34–45 (RWEQRTRKLSRA). A helical membrane pass occupies residues 46–66 (FGSPHLACYSLGICILLLNIL). The Cytoplasmic segment spans residues 67–93 (RSHCFTQAMMSQPKMEGLDNHTTYFLG). The helical transmembrane segment at 94-114 (LAFLGWGFVFVLSSFYALGFT) threads the bilayer. Position 98–100 (98–100 (GWG)) interacts with S-adenosyl-L-methionine. The Lumenal segment spans residues 115–157 (GTFLGDYFGILKESRVTTFPFSVLDNPMYWGSTANYLGWALMH). A helical membrane pass occupies residues 158–178 (ASPTGLLLTVLVAIVYVVALL). At 179–199 (YEEPFTAEIYRQKATRLHKRS) the chain is on the cytoplasmic side. Residue 180-181 (EE) coordinates S-adenosyl-L-methionine.

Belongs to the class VI-like SAM-binding methyltransferase superfamily. PEMT/PEM2 methyltransferase family. Expressed in liver (at protein level).

The protein localises to the endoplasmic reticulum membrane. It localises to the mitochondrion membrane. The catalysed reaction is a 1,2-diacyl-sn-glycero-3-phospho-N-methylethanolamine + S-adenosyl-L-methionine = a 1,2-diacyl-sn-glycero-3-phospho-N,N-dimethylethanolamine + S-adenosyl-L-homocysteine + H(+). It carries out the reaction a 1,2-diacyl-sn-glycero-3-phospho-N,N-dimethylethanolamine + S-adenosyl-L-methionine = a 1,2-diacyl-sn-glycero-3-phosphocholine + S-adenosyl-L-homocysteine + H(+). It catalyses the reaction a 1,2-diacyl-sn-glycero-3-phosphoethanolamine + S-adenosyl-L-methionine = a 1,2-diacyl-sn-glycero-3-phospho-N-methylethanolamine + S-adenosyl-L-homocysteine + H(+). The enzyme catalyses 1,2-di-(9Z-octadecenoyl)-sn-glycero-3-phosphoethanolamine + S-adenosyl-L-methionine = 1,2-di-(9Z-octadecenoyl)-sn-glycero-3-phospho-N-methylethanolamine + S-adenosyl-L-homocysteine + H(+). The catalysed reaction is 1,2-di-(9Z-octadecenoyl)-sn-glycero-3-phospho-N-methylethanolamine + S-adenosyl-L-methionine = 1,2-di-(9Z-octadecenoyl)-sn-glycero-3-phospho-N,N-dimethylethanolamine + S-adenosyl-L-homocysteine + H(+). It carries out the reaction 1,2-di-(9Z-octadecenoyl)-sn-glycero-3-phospho-N,N-dimethylethanolamine + S-adenosyl-L-methionine = 1,2-di-(9Z-octadecenoyl)-sn-glycero-3-phosphocholine + S-adenosyl-L-homocysteine + H(+). It catalyses the reaction 1,2-di-(9Z,12Z-octadecadienoyl)-sn-glycero-3-phosphoethanolamine + S-adenosyl-L-methionine = 1,2-di-(9Z,12Z-octadecadienoyl)-sn-glycero-3-phospho-N-methylethanolamine + S-adenosyl-L-homocysteine + H(+). The enzyme catalyses 1,2-di-(9Z,12Z-octadecadienoyl)-sn-glycero-3-phospho-N-methylethanolamine + S-adenosyl-L-methionine = 1,2-di-(9Z,12Z-octadecadienoyl)-sn-glycero-3-phospho-N,N-dimethylethanolamine + S-adenosyl-L-homocysteine + H(+). The catalysed reaction is 1,2-di-(9Z,12Z-octadecadienoyl)-sn-glycero-3-phospho-N,N-dimethylethanolamine + S-adenosyl-L-methionine = 1,2-di-(9Z,12Z-octadecadienoyl)-sn-glycero-3-phosphocholine + S-adenosyl-L-homocysteine + H(+). It carries out the reaction 1,2-di-(9Z,12Z,15Z-octadecatrienoyl)-sn-glycero-3-phosphoethanolamine + S-adenosyl-L-methionine = 1,2-di-(9Z,12Z,15Z-octadecatrienoyl)-sn-glycero-3-phospho-N-methylethanolamine + S-adenosyl-L-homocysteine + H(+). It catalyses the reaction 1,2-di-(9Z,12Z,15Z-octadecatrienoyl)-sn-glycero-3-phospho-N-methylethanolamine + S-adenosyl-L-methionine = 1,2-di-(9Z,12Z,15Z-octadecatrienoyl)-sn-glycero-3-phospho-N,N-dimethylethanolamine + S-adenosyl-L-homocysteine + H(+). The enzyme catalyses 1,2-di-(9Z,12Z,15Z-octadecatrienoyl)-sn-glycero-3-phospho-N,N-dimethylethanolamine + S-adenosyl-L-methionine = 1,2-di-(9Z,12Z,15Z-octadecatrienoyl)-sn-glycero-3-phosphocholine + S-adenosyl-L-homocysteine + H(+). The catalysed reaction is 1-hexadecanoyl-2-(4Z,7Z,10Z,13Z,16Z,19Z-docosahexaenoyl)-sn-glycero-3-phosphoethanolamine + S-adenosyl-L-methionine = 1-hexadecanoyl-2-(4Z,7Z,10Z,13Z,16Z,19Z-docosahexaenoyl)-sn-glycero-3-phospho-N-methylethanolamine + S-adenosyl-L-homocysteine + H(+). It carries out the reaction 1-hexadecanoyl-2-(4Z,7Z,10Z,13Z,16Z,19Z-docosahexaenoyl)-sn-glycero-3-phospho-N-methylethanolamine + S-adenosyl-L-methionine = 1-hexadecanoyl-2-(4Z,7Z,10Z,13Z,16Z,19Z-docosahexaenoyl)-sn-glycero-3-phospho-N,N-dimethylethanolamine + S-adenosyl-L-homocysteine + H(+). It catalyses the reaction 1-hexadecanoyl-2-(4Z,7Z,10Z,13Z,16Z,19Z-docosahexaenoyl)-sn-glycero-3-phospho-N,N-dimethylethanolamine + S-adenosyl-L-methionine = 1-hexadecanoyl-2-(4Z,7Z,10Z,13Z,16Z,19Z-docosahexaenoyl)-sn-glycero-3-phosphocholine + S-adenosyl-L-homocysteine + H(+). It functions in the pathway phospholipid metabolism; phosphatidylcholine biosynthesis. Its function is as follows. Catalyzes the three sequential steps of the methylation pathway for the biosynthesis of phosphatidylcholine, a critical and essential component for membrane structure. Uses S-adenosylmethionine (S-adenosyl-L-methionine, SAM or AdoMet) as the methyl group donor for the methylation of phosphatidylethanolamine (1,2-diacyl-sn-glycero-3-phosphoethanolamine, PE) to phosphatidylmonomethylethanolamine (1,2-diacyl-sn-glycero-3-phospho-N-methylethanolamine, PMME), PMME to phosphatidyldimethylethanolamine (1,2-diacyl-sn-glycero-3-phospho-N,N-dimethylethanolamine, PDME), and PDME to phosphatidylcholine (1,2-diacyl-sn-glycero-3-phosphocholine, PC), producing S-adenosyl-L-homocysteine in each step. The chain is Phosphatidylethanolamine N-methyltransferase from Mus musculus (Mouse).